Reading from the N-terminus, the 447-residue chain is Phosphoglucosamine mutase (447 aa).

The active-site Phosphoserine intermediate is the serine 105. 4 residues coordinate Mg(2+): serine 105, aspartate 244, aspartate 246, and aspartate 248. Serine 105 carries the post-translational modification Phosphoserine.

This sequence belongs to the phosphohexose mutase family. Mg(2+) is required as a cofactor. Post-translationally, activated by phosphorylation.

The enzyme catalyses alpha-D-glucosamine 1-phosphate = D-glucosamine 6-phosphate. Its function is as follows. Catalyzes the conversion of glucosamine-6-phosphate to glucosamine-1-phosphate. The protein is Phosphoglucosamine mutase of Polynucleobacter asymbioticus (strain DSM 18221 / CIP 109841 / QLW-P1DMWA-1) (Polynucleobacter necessarius subsp. asymbioticus).